The primary structure comprises 365 residues: Zinc finger protein lsy-2 (365 aa).

The segment at Met1 to Tyr36 is disordered. Residues Lys8 to Tyr36 show a composition bias toward polar residues. C2H2-type zinc fingers lie at residues His78–His100, Phe106–His128, His134–His156, His264–His287, and Phe296–His318.

It is found in the nucleus speckle. Its function is as follows. Involved in transcriptional regulation. Required to specify left-right asymmetry of the ASE gustatory neurons, probably acting upstream of microRNA lsy-6. Involved in maintaining the distinction between somatic and germ cells, perhaps acting by repressing germ cell-specific genes in somatic cells. The chain is Zinc finger protein lsy-2 from Caenorhabditis elegans.